Reading from the N-terminus, the 441-residue chain is Cytochrome c biogenesis protein Ccs1 (441 aa).

The next 3 membrane-spanning stretches (helical) occupy residues 19 to 39 (LKLAIILLLMLALFSAFGTVI), 78 to 98 (TWWFTTLILLLAVSLFSCTLA), and 164 to 184 (IGPIIVHASLIIILFGALLGN).

Belongs to the Ccs1/CcsB family. As to quaternary structure, may interact with CcsA.

The protein resides in the plastid. The protein localises to the chloroplast thylakoid membrane. Functionally, required during biogenesis of c-type cytochromes (cytochrome c6 and cytochrome f) at the step of heme attachment. This chain is Cytochrome c biogenesis protein Ccs1, found in Rhodomonas salina (Cryptomonas salina).